The following is a 703-amino-acid chain: Polyribonucleotide nucleotidyltransferase (703 aa).

The Mg(2+) site is built by Asp482 and Asp488. The region spanning 549–607 is the KH domain; it reads PKAQVMKIPEDKVGLVIGPAGKNIKYIKEQFGASVWIDGANAYINAPTIEAVNKAADFI. An S1 motif domain is found at 617–679; it reads GGVYEGKVIR…EQNRLNLCSP (63 aa). Residues 677 to 703 are disordered; that stretch reads CSPDYQKPENQERPRKEQLNRKPHHRK. The segment covering 682–696 has biased composition (basic and acidic residues); it reads QKPENQERPRKEQLN.

The protein belongs to the polyribonucleotide nucleotidyltransferase family. The cofactor is Mg(2+).

The protein localises to the cytoplasm. It catalyses the reaction RNA(n+1) + phosphate = RNA(n) + a ribonucleoside 5'-diphosphate. Involved in mRNA degradation. Catalyzes the phosphorolysis of single-stranded polyribonucleotides processively in the 3'- to 5'-direction. The protein is Polyribonucleotide nucleotidyltransferase of Hydrogenobaculum sp. (strain Y04AAS1).